Consider the following 452-residue polypeptide: Tissue alpha-L-fucosidase (452 aa).

The first 17 residues, 1-17 (MLLLLLLLLVAAAQAVA), serve as a signal peptide directing secretion. 4 N-linked (GlcNAc...) asparagine glycosylation sites follow: Asn-227, Asn-254, Asn-368, and Asn-378.

It belongs to the glycosyl hydrolase 29 family. As to quaternary structure, homotetramer.

The protein resides in the lysosome. The enzyme catalyses an alpha-L-fucoside + H2O = L-fucose + an alcohol. The catalysed reaction is a neolactoside IV(2)-alpha-Fuc-nLc4Cer(d18:1(4E)) + H2O = a neolactoside nLc4Cer(d18:1(4E)) + L-fucose. It carries out the reaction a neolactoside IV(2)-alpha-Fuc-nLc4Cer(d18:0) + H2O = a neolactoside nLc4Cer(d18:0) + L-fucose. Functionally, alpha-L-fucosidase is responsible for hydrolyzing the alpha-1,6-linked fucose joined to the reducing-end N-acetylglucosamine of the carbohydrate moieties of glycoproteins. The protein is Tissue alpha-L-fucosidase (Fuca1) of Mus musculus (Mouse).